Here is a 238-residue protein sequence, read N- to C-terminus: Probable transcriptional regulatory protein VS_II1504 (238 aa).

It belongs to the TACO1 family.

Its subcellular location is the cytoplasm. This is Probable transcriptional regulatory protein VS_II1504 from Vibrio atlanticus (strain LGP32) (Vibrio splendidus (strain Mel32)).